Reading from the N-terminus, the 453-residue chain is Putative sodium-coupled neutral amino acid transporter 11 (453 aa).

The tract at residues 1 to 34 is disordered; sequence MSYQQPQLRGPLQRETDPSDRESLVSGHEHGGKS. The span at 12 to 32 shows a compositional bias: basic and acidic residues; the sequence is LQRETDPSDRESLVSGHEHGG. 11 helical membrane-spanning segments follow: residues 39–59, 66–86, 106–126, 152–172, 179–199, 222–242, 262–282, 299–319, 337–357, 359–379, and 399–419; these read AVFN…PYSM, LGIL…VLLI, GFPG…IAMI, FISR…PLSL, LGKI…VVVT, AIQA…CFLV, ILVS…TFTG, VTFG…IECF, VFHV…SLLI, CLGI…IFII, and MACV…VMAI.

The protein belongs to the amino acid/polyamine transporter 2 family. Widely expressed.

It localises to the membrane. Its function is as follows. Putative sodium-dependent amino acid/proton antiporter. The sequence is that of Putative sodium-coupled neutral amino acid transporter 11 (Slc38a11) from Rattus norvegicus (Rat).